The following is an 848-amino-acid chain: DNA mismatch repair protein MutS (848 aa).

610–617 (GPNMGGKS) serves as a coordination point for ATP.

Belongs to the DNA mismatch repair MutS family.

Its function is as follows. This protein is involved in the repair of mismatches in DNA. It is possible that it carries out the mismatch recognition step. This protein has a weak ATPase activity. The chain is DNA mismatch repair protein MutS from Francisella philomiragia subsp. philomiragia (strain ATCC 25017 / CCUG 19701 / FSC 153 / O#319-036).